The following is a 234-amino-acid chain: LexA repressor (234 aa).

Positions 41-61 (RAEIAAELGFRSPNAAEEHLK) form a DNA-binding region, H-T-H motif. Residues serine 152 and lysine 189 each act as for autocatalytic cleavage activity in the active site.

It belongs to the peptidase S24 family. Homodimer.

The enzyme catalyses Hydrolysis of Ala-|-Gly bond in repressor LexA.. In terms of biological role, represses a number of genes involved in the response to DNA damage (SOS response), including recA and lexA. In the presence of single-stranded DNA, RecA interacts with LexA causing an autocatalytic cleavage which disrupts the DNA-binding part of LexA, leading to derepression of the SOS regulon and eventually DNA repair. The sequence is that of LexA repressor from Polaromonas naphthalenivorans (strain CJ2).